An 87-amino-acid chain; its full sequence is Large ribosomal subunit protein bL31B (87 aa).

This sequence belongs to the bacterial ribosomal protein bL31 family. Type B subfamily. Part of the 50S ribosomal subunit.

This chain is Large ribosomal subunit protein bL31B, found in Escherichia coli O8 (strain IAI1).